A 108-amino-acid chain; its full sequence is Urease subunit beta (108 aa).

It belongs to the urease beta subunit family. In terms of assembly, heterotrimer of UreA (gamma), UreB (beta) and UreC (alpha) subunits. Three heterotrimers associate to form the active enzyme.

Its subcellular location is the cytoplasm. The enzyme catalyses urea + 2 H2O + H(+) = hydrogencarbonate + 2 NH4(+). It functions in the pathway nitrogen metabolism; urea degradation; CO(2) and NH(3) from urea (urease route): step 1/1. The sequence is that of Urease subunit beta from Trichormus variabilis (strain ATCC 29413 / PCC 7937) (Anabaena variabilis).